The following is a 167-amino-acid chain: NAD(P)H-quinone oxidoreductase subunit I, chloroplastic (167 aa).

2 4Fe-4S ferredoxin-type domains span residues 55-84 and 95-124; these read GRIH…VDWK and LNYS…MTEE. 8 residues coordinate [4Fe-4S] cluster: Cys64, Cys67, Cys70, Cys74, Cys104, Cys107, Cys110, and Cys114.

Belongs to the complex I 23 kDa subunit family. NDH is composed of at least 16 different subunits, 5 of which are encoded in the nucleus. [4Fe-4S] cluster serves as cofactor.

It is found in the plastid. Its subcellular location is the chloroplast thylakoid membrane. The enzyme catalyses a plastoquinone + NADH + (n+1) H(+)(in) = a plastoquinol + NAD(+) + n H(+)(out). The catalysed reaction is a plastoquinone + NADPH + (n+1) H(+)(in) = a plastoquinol + NADP(+) + n H(+)(out). In terms of biological role, NDH shuttles electrons from NAD(P)H:plastoquinone, via FMN and iron-sulfur (Fe-S) centers, to quinones in the photosynthetic chain and possibly in a chloroplast respiratory chain. The immediate electron acceptor for the enzyme in this species is believed to be plastoquinone. Couples the redox reaction to proton translocation, and thus conserves the redox energy in a proton gradient. The chain is NAD(P)H-quinone oxidoreductase subunit I, chloroplastic from Eucalyptus globulus subsp. globulus (Tasmanian blue gum).